A 74-amino-acid polypeptide reads, in one-letter code: Protein krueppel (74 aa).

4 consecutive C2H2-type zinc fingers follow at residues 1–4 (ERTH), 10–32 (FECPECHKRFTRDHHLKTHMRLH), 38–60 (YHCSHCDRQFVQVANLRRHLRVH), and 66–74 (YACELCAAK).

The protein belongs to the krueppel C2H2-type zinc-finger protein family.

The protein localises to the nucleus. Its function is as follows. Krueppel is a gap class segmentation protein. This Apis mellifera (Honeybee) protein is Protein krueppel (Kr).